A 368-amino-acid chain; its full sequence is CCA-adding enzyme (368 aa).

2 residues coordinate ATP: G8 and R11. The CTP site is built by G8 and R11. Mg(2+)-binding residues include D21 and D23. ATP-binding residues include R91, R137, and R140. Positions 91, 137, and 140 each coordinate CTP.

Belongs to the tRNA nucleotidyltransferase/poly(A) polymerase family. Bacterial CCA-adding enzyme type 2 subfamily. It depends on Mg(2+) as a cofactor.

The catalysed reaction is a tRNA precursor + 2 CTP + ATP = a tRNA with a 3' CCA end + 3 diphosphate. It carries out the reaction a tRNA with a 3' CCA end + 2 CTP + ATP = a tRNA with a 3' CCACCA end + 3 diphosphate. In terms of biological role, catalyzes the addition and repair of the essential 3'-terminal CCA sequence in tRNAs without using a nucleic acid template. Adds these three nucleotides in the order of C, C, and A to the tRNA nucleotide-73, using CTP and ATP as substrates and producing inorganic pyrophosphate. tRNA 3'-terminal CCA addition is required both for tRNA processing and repair. Also involved in tRNA surveillance by mediating tandem CCA addition to generate a CCACCA at the 3' terminus of unstable tRNAs. While stable tRNAs receive only 3'-terminal CCA, unstable tRNAs are marked with CCACCA and rapidly degraded. This Pseudomonas putida (strain ATCC 700007 / DSM 6899 / JCM 31910 / BCRC 17059 / LMG 24140 / F1) protein is CCA-adding enzyme.